Consider the following 145-residue polypeptide: Ribonuclease H (145 aa).

Residues 2 to 143 enclose the RNase H type-1 domain; sequence SKKEVIIYTD…ADSLARKAII (142 aa). Residues Asp-11, Glu-49, Asp-71, and Asp-135 each coordinate Mg(2+).

It belongs to the RNase H family. In terms of assembly, monomer. Mg(2+) serves as cofactor.

It is found in the cytoplasm. It catalyses the reaction Endonucleolytic cleavage to 5'-phosphomonoester.. In terms of biological role, endonuclease that specifically degrades the RNA of RNA-DNA hybrids. The sequence is that of Ribonuclease H from Wolbachia pipientis wMel.